Here is a 185-residue protein sequence, read N- to C-terminus: Thymidine kinase (185 aa).

8-15 (GPMYSGKT) provides a ligand contact to ATP. Residue Glu85 is the Proton acceptor of the active site. Position 117 (Phe117) interacts with substrate. Positions 142 and 145 each coordinate Zn(2+). A substrate-binding site is contributed by 161–165 (IIEIG). Positions 174 and 177 each coordinate Zn(2+).

This sequence belongs to the thymidine kinase family.

The enzyme catalyses thymidine + ATP = dTMP + ADP + H(+). This chain is Thymidine kinase (TK), found in Choristoneura fumiferana entomopoxvirus (CfEPV).